The sequence spans 133 residues: Ribosome-binding factor A (133 aa).

Belongs to the RbfA family. As to quaternary structure, monomer. Binds 30S ribosomal subunits, but not 50S ribosomal subunits or 70S ribosomes.

The protein resides in the cytoplasm. Its function is as follows. One of several proteins that assist in the late maturation steps of the functional core of the 30S ribosomal subunit. Associates with free 30S ribosomal subunits (but not with 30S subunits that are part of 70S ribosomes or polysomes). Required for efficient processing of 16S rRNA. May interact with the 5'-terminal helix region of 16S rRNA. In Trichormus variabilis (strain ATCC 29413 / PCC 7937) (Anabaena variabilis), this protein is Ribosome-binding factor A.